A 638-amino-acid chain; its full sequence is Chaperone protein DnaK (638 aa).

Position 198 is a phosphothreonine; by autocatalysis (Thr198). A disordered region spans residues 599–638 (IYESQQAEGGAEGGPSGHHDDGIVDADYEEVKDDNTKKSA). Positions 621–630 (IVDADYEEVK) are enriched in acidic residues.

The protein belongs to the heat shock protein 70 family.

Functionally, acts as a chaperone. This is Chaperone protein DnaK from Allorhizobium ampelinum (strain ATCC BAA-846 / DSM 112012 / S4) (Agrobacterium vitis (strain S4)).